The chain runs to 471 residues: Bifunctional protein GlmU (471 aa).

The pyrophosphorylase stretch occupies residues 1–235; it reads MVAVAILAAG…YQEIFGINNR (235 aa). UDP-N-acetyl-alpha-D-glucosamine is bound by residues 7–10, Lys21, Gln82, and 87–88; these read LAAG and GT. Asp112 contributes to the Mg(2+) binding site. UDP-N-acetyl-alpha-D-glucosamine-binding residues include Gly149, Glu164, Asn179, and Asn233. A Mg(2+)-binding site is contributed by Asn233. The tract at residues 236–256 is linker; sequence KHLAKAHEILQVRVKDDWMEA. An N-acetyltransferase region spans residues 257–471; it reads GVTLIDPDSI…SKKEENKSSP (215 aa). Positions 338 and 356 each coordinate UDP-N-acetyl-alpha-D-glucosamine. His368 serves as the catalytic Proton acceptor. UDP-N-acetyl-alpha-D-glucosamine-binding residues include Tyr371 and Asn382. Acetyl-CoA is bound by residues Ala385, 391–392, Ser410, Ala428, and Arg445; that span reads NY.

In the N-terminal section; belongs to the N-acetylglucosamine-1-phosphate uridyltransferase family. It in the C-terminal section; belongs to the transferase hexapeptide repeat family. In terms of assembly, homotrimer. Mg(2+) is required as a cofactor.

The protein localises to the cytoplasm. The catalysed reaction is alpha-D-glucosamine 1-phosphate + acetyl-CoA = N-acetyl-alpha-D-glucosamine 1-phosphate + CoA + H(+). The enzyme catalyses N-acetyl-alpha-D-glucosamine 1-phosphate + UTP + H(+) = UDP-N-acetyl-alpha-D-glucosamine + diphosphate. The protein operates within nucleotide-sugar biosynthesis; UDP-N-acetyl-alpha-D-glucosamine biosynthesis; N-acetyl-alpha-D-glucosamine 1-phosphate from alpha-D-glucosamine 6-phosphate (route II): step 2/2. It participates in nucleotide-sugar biosynthesis; UDP-N-acetyl-alpha-D-glucosamine biosynthesis; UDP-N-acetyl-alpha-D-glucosamine from N-acetyl-alpha-D-glucosamine 1-phosphate: step 1/1. Its pathway is bacterial outer membrane biogenesis; LPS lipid A biosynthesis. Its function is as follows. Catalyzes the last two sequential reactions in the de novo biosynthetic pathway for UDP-N-acetylglucosamine (UDP-GlcNAc). The C-terminal domain catalyzes the transfer of acetyl group from acetyl coenzyme A to glucosamine-1-phosphate (GlcN-1-P) to produce N-acetylglucosamine-1-phosphate (GlcNAc-1-P), which is converted into UDP-GlcNAc by the transfer of uridine 5-monophosphate (from uridine 5-triphosphate), a reaction catalyzed by the N-terminal domain. This chain is Bifunctional protein GlmU, found in Trichodesmium erythraeum (strain IMS101).